Here is a 165-residue protein sequence, read N- to C-terminus: Transcription antitermination protein NusB (165 aa).

This sequence belongs to the NusB family.

In terms of biological role, involved in transcription antitermination. Required for transcription of ribosomal RNA (rRNA) genes. Binds specifically to the boxA antiterminator sequence of the ribosomal RNA (rrn) operons. In Rhodococcus erythropolis (strain PR4 / NBRC 100887), this protein is Transcription antitermination protein NusB.